The sequence spans 454 residues: Protein odr-4 homolog (454 aa).

Transmembrane regions (helical) follow at residues 82–102 (MLPG…ELAN) and 432–452 (IGVI…FHYF).

The protein belongs to the ODR-4 family.

The protein resides in the membrane. In terms of biological role, may play a role in the trafficking of a subset of G-protein coupled receptors. The chain is Protein odr-4 homolog (ODR4) from Pongo abelii (Sumatran orangutan).